The chain runs to 203 residues: RNA chaperone ProQ (203 aa).

A disordered region spans residues 111–138 (KAKRQALAPKKPAKKVAPKRAPAVKKER).

The protein belongs to the ProQ family.

It is found in the cytoplasm. RNA chaperone with significant RNA binding, RNA strand exchange and RNA duplexing activities. This Shewanella frigidimarina (strain NCIMB 400) protein is RNA chaperone ProQ.